A 253-amino-acid polypeptide reads, in one-letter code: Triosephosphate isomerase (253 aa).

8–10 serves as a coordination point for substrate; sequence NWK. The Electrophile role is filled by H93. Catalysis depends on E165, which acts as the Proton acceptor. Substrate-binding positions include G171, S210, and 231-232; that span reads GG.

It belongs to the triosephosphate isomerase family. In terms of assembly, homodimer.

It is found in the cytoplasm. The catalysed reaction is D-glyceraldehyde 3-phosphate = dihydroxyacetone phosphate. The protein operates within carbohydrate biosynthesis; gluconeogenesis. Its pathway is carbohydrate degradation; glycolysis; D-glyceraldehyde 3-phosphate from glycerone phosphate: step 1/1. Functionally, involved in the gluconeogenesis. Catalyzes stereospecifically the conversion of dihydroxyacetone phosphate (DHAP) to D-glyceraldehyde-3-phosphate (G3P). This chain is Triosephosphate isomerase, found in Francisella tularensis subsp. mediasiatica (strain FSC147).